The following is a 174-amino-acid chain: Actin-related protein 2/3 complex subunit 3 (174 aa).

Belongs to the ARPC3 family. In terms of assembly, component of the Arp2/3 complex composed of arpB/Arp2, arpC/Arp3, arcA/p41-arc, arcB/p34-arc, arcC/p21-arc, arcD/p20-arc and arcE/p16-arc. Interacts with carmil (via the region between the LRR domain and COOH-terminal proline-rich domain); carmil is required for Arp2/3-dependent actin nucleation. Arp2/3 complex, MyoB, MyoC, and the alpha and beta subunits of capping protein all form a larger complex with carmil.

The protein localises to the cytoplasm. Its subcellular location is the cytoskeleton. It localises to the cytosol. The protein resides in the cell cortex. It is found in the cell projection. The protein localises to the pseudopodium. Functions as a component of the Arp2/3 complex which is involved in regulation of actin polymerization and together with an activating nucleation-promoting factor (NPF) mediates the formation of branched actin networks. Seems to contact the pointed end of the daughter actin filament. The Arp2/3 complex is involved in organizing the actin system in cell motility and chemotaxis, in phagocytosis and macropinocytosis, at late steps of endosome processing, and in mitosis. In concert with a group of other proteins, the Arp2/3 complex plays a general role in the rapid activation and adaptation of the actin system to its multiple functions. The sequence is that of Actin-related protein 2/3 complex subunit 3 (arcC) from Dictyostelium discoideum (Social amoeba).